We begin with the raw amino-acid sequence, 182 residues long: Glutathione-regulated potassium-efflux system ancillary protein KefG (182 aa).

This sequence belongs to the NAD(P)H dehydrogenase (quinone) family. KefG subfamily. In terms of assembly, interacts with KefB.

The protein localises to the cell inner membrane. The catalysed reaction is a quinone + NADH + H(+) = a quinol + NAD(+). The enzyme catalyses a quinone + NADPH + H(+) = a quinol + NADP(+). In terms of biological role, regulatory subunit of a potassium efflux system that confers protection against electrophiles. Required for full activity of KefB. The protein is Glutathione-regulated potassium-efflux system ancillary protein KefG of Yersinia pseudotuberculosis serotype O:1b (strain IP 31758).